The following is a 251-amino-acid chain: tRNA pseudouridine synthase A (251 aa).

Asp56 acts as the Nucleophile in catalysis. Tyr110 is a binding site for substrate.

Belongs to the tRNA pseudouridine synthase TruA family.

The catalysed reaction is uridine(38/39/40) in tRNA = pseudouridine(38/39/40) in tRNA. Formation of pseudouridine at positions 38, 39 and 40 in the anticodon stem and loop of transfer RNAs. This chain is tRNA pseudouridine synthase A, found in Picrophilus torridus (strain ATCC 700027 / DSM 9790 / JCM 10055 / NBRC 100828 / KAW 2/3).